Reading from the N-terminus, the 96-residue chain is Small ribosomal subunit protein bS6 (96 aa).

The protein belongs to the bacterial ribosomal protein bS6 family.

In terms of biological role, binds together with bS18 to 16S ribosomal RNA. In Synechococcus sp. (strain JA-2-3B'a(2-13)) (Cyanobacteria bacterium Yellowstone B-Prime), this protein is Small ribosomal subunit protein bS6.